Here is a 280-residue protein sequence, read N- to C-terminus: DNA repair protein XRCC2 (280 aa).

At Ser10 the chain carries Phosphoserine.

The protein belongs to the RecA family. RAD51 subfamily. As to quaternary structure, interacts with RAD51D. Part of the BCDX2 complex consisting of RAD51B, RAD51C, RAD51D and XRCC2; the complex has a ring-like structure arranged into a flat disk around a central channel. In the absence of DNA, the BCDX2 subcomplex XRCC2:RAD51D formed a multimeric ring structure; in the presence of single-stranded DNA it formed a filamentous structure with the ssDNA.

The protein localises to the nucleus. It localises to the cytoplasm. Its subcellular location is the cytoskeleton. The protein resides in the microtubule organizing center. It is found in the centrosome. Its function is as follows. Involved in the homologous recombination repair (HRR) pathway of double-stranded DNA, thought to repair chromosomal fragmentation, translocations and deletions. Part of the RAD51 paralog protein complex BCDX2 which acts in the BRCA1-BRCA2-dependent HR pathway. Upon DNA damage, BCDX2 acts downstream of BRCA2 recruitment and upstream of RAD51 recruitment. BCDX2 binds predominantly to the intersection of the four duplex arms of the Holliday junction and to junction of replication forks. The BCDX2 complex was originally reported to bind single-stranded DNA, single-stranded gaps in duplex DNA and specifically to nicks in duplex DNA. The protein is DNA repair protein XRCC2 (XRCC2) of Homo sapiens (Human).